The following is a 221-amino-acid chain: MIKDAVNTETVEVNPVDQVRSTIYQLLSSLFAKEIDHKILHDLTSEQAQQFWAQLGSEAEFKADVDVLVAELAKLNTDKALLELAADYCGLFLVGTKYSASPYASLYLDDKPAKKGDEPLLFGEQHQQMTQFLKQSQLQVQSEFPEPADHLAVILAYVAHLCTHSDEAEQHSFIKANLANWLGNFVAKVTEVDTGNFYQALARLTYSWVKSDAEWLESELN.

It belongs to the TorD/DmsD family. TorD subfamily.

It localises to the cytoplasm. In terms of biological role, involved in the biogenesis of TorA. Acts on TorA before the insertion of the molybdenum cofactor and, as a result, probably favors a conformation of the apoenzyme that is competent for acquiring the cofactor. The protein is Chaperone protein TorD of Shewanella pealeana (strain ATCC 700345 / ANG-SQ1).